Reading from the N-terminus, the 345-residue chain is Probable RuBisCO transcriptional regulator (345 aa).

Residues Phe6–Thr63 form the HTH lysR-type domain. The H-T-H motif DNA-binding region spans Phe23 to Gln42. The disordered stretch occupies residues Leu311–Thr345. Basic and acidic residues predominate over residues Arg328–Ile339.

The protein belongs to the LysR transcriptional regulatory family.

Its function is as follows. Trans-acting transcriptional regulator of RuBisCO genes (rbcL and rbcS) expression. In Synechocystis sp. (strain ATCC 27184 / PCC 6803 / Kazusa), this protein is Probable RuBisCO transcriptional regulator (rbcR).